A 392-amino-acid chain; its full sequence is Putative nicotinate phosphoribosyltransferase (392 aa).

Residues Tyr21, Phe138, and Thr179 each coordinate nicotinate. At His182 the chain carries Phosphohistidine. Residue Arg235 coordinates nicotinate. Residues Ser240, Gly272, and Thr293 each coordinate 5-phospho-alpha-D-ribose 1-diphosphate. 4 residues coordinate Zn(2+): Cys330, Cys333, Cys348, and Cys350.

This sequence belongs to the NAPRTase family. Highly divergent. Homodimer. Forms a trimer of dimers in the crystal. Transiently phosphorylated on a His residue during the reaction cycle. Phosphorylation strongly increases the affinity for substrates and increases the rate of nicotinate D-ribonucleotide production. Dephosphorylation regenerates the low-affinity form of the enzyme, leading to product release.

It catalyses the reaction nicotinate + 5-phospho-alpha-D-ribose 1-diphosphate + ATP + H2O = nicotinate beta-D-ribonucleotide + ADP + phosphate + diphosphate. It participates in cofactor biosynthesis; NAD(+) biosynthesis; nicotinate D-ribonucleotide from nicotinate: step 1/1. In terms of biological role, catalyzes the synthesis of beta-nicotinate D-ribonucleotide from nicotinate and 5-phospho-D-ribose 1-phosphate at the expense of ATP. This chain is Putative nicotinate phosphoribosyltransferase, found in Thermoplasma acidophilum (strain ATCC 25905 / DSM 1728 / JCM 9062 / NBRC 15155 / AMRC-C165).